The primary structure comprises 420 residues: Gamma-glutamyl phosphate reductase (420 aa).

This sequence belongs to the gamma-glutamyl phosphate reductase family.

The protein resides in the cytoplasm. The catalysed reaction is L-glutamate 5-semialdehyde + phosphate + NADP(+) = L-glutamyl 5-phosphate + NADPH + H(+). Its pathway is amino-acid biosynthesis; L-proline biosynthesis; L-glutamate 5-semialdehyde from L-glutamate: step 2/2. Catalyzes the NADPH-dependent reduction of L-glutamate 5-phosphate into L-glutamate 5-semialdehyde and phosphate. The product spontaneously undergoes cyclization to form 1-pyrroline-5-carboxylate. This chain is Gamma-glutamyl phosphate reductase, found in Neisseria meningitidis serogroup A / serotype 4A (strain DSM 15465 / Z2491).